The chain runs to 315 residues: Carbamate kinase (315 aa).

It belongs to the carbamate kinase family. In terms of assembly, homodimer.

It is found in the cytoplasm. The catalysed reaction is hydrogencarbonate + NH4(+) + ATP = carbamoyl phosphate + ADP + H2O + H(+). The chain is Carbamate kinase (cpkA) from Thermococcus kodakarensis (strain ATCC BAA-918 / JCM 12380 / KOD1) (Pyrococcus kodakaraensis (strain KOD1)).